The primary structure comprises 429 residues: Enolase (429 aa).

Gln-162 contributes to the (2R)-2-phosphoglycerate binding site. The active-site Proton donor is Glu-204. Residues Asp-241, Glu-282, and Asp-309 each coordinate Mg(2+). The (2R)-2-phosphoglycerate site is built by Lys-334, Arg-363, Ser-364, and Lys-385. Lys-334 functions as the Proton acceptor in the catalytic mechanism.

The protein belongs to the enolase family. The cofactor is Mg(2+).

It is found in the cytoplasm. Its subcellular location is the secreted. It localises to the cell surface. It catalyses the reaction (2R)-2-phosphoglycerate = phosphoenolpyruvate + H2O. Its pathway is carbohydrate degradation; glycolysis; pyruvate from D-glyceraldehyde 3-phosphate: step 4/5. Catalyzes the reversible conversion of 2-phosphoglycerate (2-PG) into phosphoenolpyruvate (PEP). It is essential for the degradation of carbohydrates via glycolysis. The polypeptide is Enolase (Acidothermus cellulolyticus (strain ATCC 43068 / DSM 8971 / 11B)).